The chain runs to 501 residues: L-arabinose isomerase (501 aa).

4 residues coordinate Mn(2+): Glu307, Glu334, His351, and His450.

The protein belongs to the arabinose isomerase family. The cofactor is Mn(2+).

It carries out the reaction beta-L-arabinopyranose = L-ribulose. It participates in carbohydrate degradation; L-arabinose degradation via L-ribulose; D-xylulose 5-phosphate from L-arabinose (bacterial route): step 1/3. In terms of biological role, catalyzes the conversion of L-arabinose to L-ribulose. The sequence is that of L-arabinose isomerase from Acidothermus cellulolyticus (strain ATCC 43068 / DSM 8971 / 11B).